A 315-amino-acid chain; its full sequence is Protoheme IX farnesyltransferase (315 aa).

9 helical membrane passes run Ile38 to Pro58, Leu62 to Met82, Leu111 to Trp131, Leu132 to Leu152, Asn159 to Thr179, Trp184 to Leu204, Ile233 to Thr253, Trp255 to Leu275, and Leu293 to Phe313.

The protein belongs to the UbiA prenyltransferase family. Protoheme IX farnesyltransferase subfamily.

It is found in the cell membrane. It catalyses the reaction heme b + (2E,6E)-farnesyl diphosphate + H2O = Fe(II)-heme o + diphosphate. Its pathway is porphyrin-containing compound metabolism; heme O biosynthesis; heme O from protoheme: step 1/1. Its function is as follows. Converts heme B (protoheme IX) to heme O by substitution of the vinyl group on carbon 2 of heme B porphyrin ring with a hydroxyethyl farnesyl side group. The protein is Protoheme IX farnesyltransferase of Streptomyces coelicolor (strain ATCC BAA-471 / A3(2) / M145).